Here is a 459-residue protein sequence, read N- to C-terminus: UDP-N-acetylmuramoyl-tripeptide--D-alanyl-D-alanine ligase (459 aa).

Residue 121–127 (GSSGKTT) participates in ATP binding.

It belongs to the MurCDEF family. MurF subfamily.

It is found in the cytoplasm. It catalyses the reaction D-alanyl-D-alanine + UDP-N-acetyl-alpha-D-muramoyl-L-alanyl-gamma-D-glutamyl-meso-2,6-diaminopimelate + ATP = UDP-N-acetyl-alpha-D-muramoyl-L-alanyl-gamma-D-glutamyl-meso-2,6-diaminopimeloyl-D-alanyl-D-alanine + ADP + phosphate + H(+). It functions in the pathway cell wall biogenesis; peptidoglycan biosynthesis. Its function is as follows. Involved in cell wall formation. Catalyzes the final step in the synthesis of UDP-N-acetylmuramoyl-pentapeptide, the precursor of murein. The chain is UDP-N-acetylmuramoyl-tripeptide--D-alanyl-D-alanine ligase from Treponema pallidum (strain Nichols).